Reading from the N-terminus, the 303-residue chain is Sulfate adenylyltransferase subunit 2 (303 aa).

The protein belongs to the PAPS reductase family. CysD subfamily. Heterodimer composed of CysD, the smaller subunit, and CysN.

It catalyses the reaction sulfate + ATP + H(+) = adenosine 5'-phosphosulfate + diphosphate. Its pathway is sulfur metabolism; hydrogen sulfide biosynthesis; sulfite from sulfate: step 1/3. In terms of biological role, with CysN forms the ATP sulfurylase (ATPS) that catalyzes the adenylation of sulfate producing adenosine 5'-phosphosulfate (APS) and diphosphate, the first enzymatic step in sulfur assimilation pathway. APS synthesis involves the formation of a high-energy phosphoric-sulfuric acid anhydride bond driven by GTP hydrolysis by CysN coupled to ATP hydrolysis by CysD. The sequence is that of Sulfate adenylyltransferase subunit 2 from Sulfurovum sp. (strain NBC37-1).